Here is a 429-residue protein sequence, read N- to C-terminus: Phosphoribosylamine--glycine ligase (429 aa).

The region spanning 109 to 316 is the ATP-grasp domain; it reads KDFLARHNIP…LVELCQAAIA (208 aa). Position 135–196 (135–196) interacts with ATP; the sequence is VREKGAPIVV…EEFLDGEEAS (62 aa). Mg(2+) is bound by residues Glu286 and Asn288.

It belongs to the GARS family. It depends on Mg(2+) as a cofactor. Requires Mn(2+) as cofactor.

It carries out the reaction 5-phospho-beta-D-ribosylamine + glycine + ATP = N(1)-(5-phospho-beta-D-ribosyl)glycinamide + ADP + phosphate + H(+). It functions in the pathway purine metabolism; IMP biosynthesis via de novo pathway; N(1)-(5-phospho-D-ribosyl)glycinamide from 5-phospho-alpha-D-ribose 1-diphosphate: step 2/2. This is Phosphoribosylamine--glycine ligase from Vibrio cholerae serotype O1 (strain ATCC 39315 / El Tor Inaba N16961).